The chain runs to 353 residues: MSVAGLKKQFHKASQLFSEKISGAEGTKLDEEFQEMERKIDVTNKAVAELLSKSTEYLQPNPAYRAKLGMLNTMSKIRGQVKTTGYPQTEGLLGDCMIRYGRELGDDSMFGLALLDAGESMKQMAEVKDSLDINVKQNFIDPLQLLQDKDLKEIGHHLKKLEGRRLDYDYKKKRLGKIPDEEVKQAVEKFEESKELAERSMFNFLENDVEQVSQLAVFVEAALDYHKQSTEILEDLQSKLQNRINVASSRPKREFKPKPVITTTLETGDNQQHNGIAYSSSIKSSGSSMHVDQPCCQALYDFEPENEGELGFKEGDIITLTNQIDENWYEGMLNGESGFFPHNYVEVMVPLPQ.

The interval 1–21 is membrane-binding amphipathic helix; sequence MSVAGLKKQFHKASQLFSEKI. The 232-residue stretch at 18–249 folds into the BAR domain; that stretch reads SEKISGAEGT…LQNRINVASS (232 aa). The required for dimerization upon membrane association stretch occupies residues 60–87; that stretch reads PNPAYRAKLGMLNTMSKIRGQVKTTGYP. Positions 180–201 form a coiled coil; that stretch reads DEEVKQAVEKFEESKELAERSM. The interval 218-254 is interaction with ARC; that stretch reads FVEAALDYHKQSTEILEDLQSKLQNRINVASSRPKRE. The SH3 domain maps to 291 to 350; it reads VDQPCCQALYDFEPENEGELGFKEGDIITLTNQIDENWYEGMLNGESGFFPHNYVEVMVP.

Belongs to the endophilin family. As to quaternary structure, interacts with ARC. Interacts with SYNJ1 and DNM1. As to expression, highest level in a region associated with endocytosis of yolk proteins in developing oocytes (at protein level). Highest level in small ovarian follicles. High levels in brain and testis. Lower level in adrenal glands.

Its subcellular location is the cytoplasm. It localises to the early endosome membrane. Functionally, implicated in endocytosis. May recruit other proteins to membranes with high curvature. Implicated in endocytosis of yolk proteins during oogenesis. This Gallus gallus (Chicken) protein is Endophilin-A3.